Here is a 273-residue protein sequence, read N- to C-terminus: MPELPEVETVRRGLEKLLLGRTILSLEVKVPKMIKTSYDSFLHDLPGQTIQAMRRRGKYLIFDFGQLIIISHLRMEGKYLLFTDQVPDNKHFHLFFKLDDGSTLVYQDVRKFGTFDLLDRKQEEAYFTRKKLGPEPTKKTFKYVPFERALMHSGKSIKPLLLEQKLVAGLGNIYVDEVLWAAKVHPETPANKLSKAAMKRVHDQTIAILQLGIAKGGSTIRTYRNALGEDGTMQNYLQVYGKTGQPCPRCASMIVKIKLGGRGTHLCPHCQKR.

The Schiff-base intermediate with DNA role is filled by proline 2. Glutamate 3 acts as the Proton donor in catalysis. Lysine 58 serves as the catalytic Proton donor; for beta-elimination activity. DNA-binding residues include histidine 91 and arginine 110. An FPG-type zinc finger spans residues 238 to 272; it reads QVYGKTGQPCPRCASMIVKIKLGGRGTHLCPHCQK. Arginine 262 (proton donor; for delta-elimination activity) is an active-site residue.

Belongs to the FPG family. In terms of assembly, monomer. Zn(2+) serves as cofactor.

It carries out the reaction Hydrolysis of DNA containing ring-opened 7-methylguanine residues, releasing 2,6-diamino-4-hydroxy-5-(N-methyl)formamidopyrimidine.. The enzyme catalyses 2'-deoxyribonucleotide-(2'-deoxyribose 5'-phosphate)-2'-deoxyribonucleotide-DNA = a 3'-end 2'-deoxyribonucleotide-(2,3-dehydro-2,3-deoxyribose 5'-phosphate)-DNA + a 5'-end 5'-phospho-2'-deoxyribonucleoside-DNA + H(+). Involved in base excision repair of DNA damaged by oxidation or by mutagenic agents. Acts as a DNA glycosylase that recognizes and removes damaged bases. Has a preference for oxidized purines, such as 7,8-dihydro-8-oxoguanine (8-oxoG). Has AP (apurinic/apyrimidinic) lyase activity and introduces nicks in the DNA strand. Cleaves the DNA backbone by beta-delta elimination to generate a single-strand break at the site of the removed base with both 3'- and 5'-phosphates. The protein is Formamidopyrimidine-DNA glycosylase of Streptococcus thermophilus (strain ATCC BAA-250 / LMG 18311).